The following is a 179-amino-acid chain: MSTLRTEYLENVAPKLQEEFGYSNAMQIPRLSKVVLNMGLGEAIQNNKILEGAVDELTLISGQKPVVTKAKKSIAAFKLREGMPIGVTATLRRDRMYDFLNKLVNVTLPRVRDFRGISPKAFDGRGNYTLGIREQIIFPEINYDRIDKVKGLNITIVTTAKNDEEGRRLLTLLGMPFRK.

It belongs to the universal ribosomal protein uL5 family. As to quaternary structure, part of the 50S ribosomal subunit; part of the 5S rRNA/L5/L18/L25 subcomplex. Contacts the 5S rRNA and the P site tRNA. Forms a bridge to the 30S subunit in the 70S ribosome.

This is one of the proteins that bind and probably mediate the attachment of the 5S RNA into the large ribosomal subunit, where it forms part of the central protuberance. In the 70S ribosome it contacts protein S13 of the 30S subunit (bridge B1b), connecting the 2 subunits; this bridge is implicated in subunit movement. Contacts the P site tRNA; the 5S rRNA and some of its associated proteins might help stabilize positioning of ribosome-bound tRNAs. In Desulfatibacillum aliphaticivorans, this protein is Large ribosomal subunit protein uL5.